The sequence spans 276 residues: Zinc transporter ZTP29 (276 aa).

The Cytoplasmic segment spans residues Met1–Leu6. A helical transmembrane segment spans residues Val7–Val27. Residues Leu28 to Lys35 lie on the Lumenal side of the membrane. A helical transmembrane segment spans residues Met36 to Leu56. The Cytoplasmic segment spans residues Ala57 to Ser63. The chain crosses the membrane as a helical span at residues Ile64 to Thr84. Topologically, residues Lys85 to Ser123 are lumenal. The helical transmembrane segment at Gly124 to Leu144 threads the bilayer. Residues Gly145 to Leu156 are Cytoplasmic-facing. The helical transmembrane segment at Ala157–Phe177 threads the bilayer. Over Ala178 to Lys187 the chain is Lumenal. A helical membrane pass occupies residues Leu188–Pro208. Residues Arg209 to Leu219 are Cytoplasmic-facing. Residues Leu220–Phe240 form a helical membrane-spanning segment. Over Asp241–Lys250 the chain is Lumenal. Residues Ala251 to Pro271 form a helical membrane-spanning segment. Residues Glu272 to Leu276 are Cytoplasmic-facing.

This sequence belongs to the ZIP transporter (TC 2.A.5) family. ZupT subfamily. As to expression, expressed in hypocotyls, cotyledons, leaves and anthers.

It is found in the endoplasmic reticulum membrane. Its function is as follows. Zinc transporter involved response to salt stress. May act through the regulation of zinc levels required to induce the unfolded protein response (UPR) pathway. The protein is Zinc transporter ZTP29 (ZTP29) of Arabidopsis thaliana (Mouse-ear cress).